A 186-amino-acid chain; its full sequence is Elongation factor P (186 aa).

It belongs to the elongation factor P family.

The protein localises to the cytoplasm. It participates in protein biosynthesis; polypeptide chain elongation. Functionally, involved in peptide bond synthesis. Stimulates efficient translation and peptide-bond synthesis on native or reconstituted 70S ribosomes in vitro. Probably functions indirectly by altering the affinity of the ribosome for aminoacyl-tRNA, thus increasing their reactivity as acceptors for peptidyl transferase. In Maridesulfovibrio salexigens (strain ATCC 14822 / DSM 2638 / NCIMB 8403 / VKM B-1763) (Desulfovibrio salexigens), this protein is Elongation factor P.